The sequence spans 59 residues: Alpha-like toxin CsEv5 (59 aa).

In terms of domain architecture, LCN-type CS-alpha/beta spans 1–59 (KDGYPVDSKGCKLSCVANNYCDNQCKMKKASGGHCYAMSCYCEGLPENAKVSDSATNIC). 4 disulfide bridges follow: Cys-11/Cys-59, Cys-15/Cys-35, Cys-21/Cys-40, and Cys-25/Cys-42.

Belongs to the long (4 C-C) scorpion toxin superfamily. Sodium channel inhibitor family. As to expression, expressed by the venom gland.

The protein localises to the secreted. Its function is as follows. Binds voltage-independently sodium channels (Nav) and inhibits the inactivation of the activated channels, thereby blocking neuronal transmission. Is highly toxic to insects and barely toxic to mammals. As it does not compete with the classical alpha-toxin AaH2, this toxin is considered as an alpha-like toxin. This Centruroides sculpturatus (Arizona bark scorpion) protein is Alpha-like toxin CsEv5.